We begin with the raw amino-acid sequence, 245 residues long: 1-(5-phosphoribosyl)-5-[(5-phosphoribosylamino)methylideneamino] imidazole-4-carboxamide isomerase (245 aa).

The Proton acceptor role is filled by Asp8. The active-site Proton donor is Asp129.

This sequence belongs to the HisA/HisF family.

Its subcellular location is the cytoplasm. The enzyme catalyses 1-(5-phospho-beta-D-ribosyl)-5-[(5-phospho-beta-D-ribosylamino)methylideneamino]imidazole-4-carboxamide = 5-[(5-phospho-1-deoxy-D-ribulos-1-ylimino)methylamino]-1-(5-phospho-beta-D-ribosyl)imidazole-4-carboxamide. It functions in the pathway amino-acid biosynthesis; L-histidine biosynthesis; L-histidine from 5-phospho-alpha-D-ribose 1-diphosphate: step 4/9. The polypeptide is 1-(5-phosphoribosyl)-5-[(5-phosphoribosylamino)methylideneamino] imidazole-4-carboxamide isomerase (Geotalea daltonii (strain DSM 22248 / JCM 15807 / FRC-32) (Geobacter daltonii)).